We begin with the raw amino-acid sequence, 185 residues long: Ribosome-recycling factor (185 aa).

It belongs to the RRF family.

Its subcellular location is the cytoplasm. In terms of biological role, responsible for the release of ribosomes from messenger RNA at the termination of protein biosynthesis. May increase the efficiency of translation by recycling ribosomes from one round of translation to another. This is Ribosome-recycling factor from Edwardsiella ictaluri (strain 93-146).